The following is a 527-amino-acid chain: Phosphoprotein (527 aa).

2 disordered regions span residues 29–225 (NSLV…PDEL) and 285–319 (PQCHITNSPSDTSTDNASRSELRTIEEEDYLQDDD). Composition is skewed to basic and acidic residues over residues 49–60 (NEIKHLSTRDQE) and 120–134 (CNRELDQHSDGDGHS). Polar residues-rich tracts occupy residues 135-161 (NTEGASSDLASIQPCQTDDAPCSSTSY) and 285-301 (PQCHITNSPSDTSTDNA). The span at 310–319 (EEEDYLQDDD) shows a compositional bias: acidic residues. Residues 312–400 (EDYLQDDDFE…LSSVMIAIPG (89 aa)) form a multimerization region. The tract at residues 479 to 527 (VSRTVINSIITARVNNPELAAKLKLAVAKAQTKEELERIHKSIIKNLKN) is interaction with the nucleocapsid (N-RNA).

The protein belongs to the morbillivirus P protein family. In terms of assembly, homotetramer. Interacts (via multimerization domain) with polymerase L; this interaction forms the polymerase L-P complex. Interacts (via N-terminus) with N0 (via Ncore); this interaction allows P to chaperon N0 to avoid N polymerization before encapsidation. Interacts (via C-terminus) with N-RNA template; this interaction positions the polymerase on the template for both transcription and replication.

The protein localises to the host cytoplasm. Its function is as follows. Essential cofactor of the RNA polymerase L that plays a central role in the transcription and replication by forming the polymerase complex with RNA polymerase L and recruiting L to the genomic N-RNA template for RNA synthesis. Also plays a central role in the encapsidation of nascent RNA chains by forming the encapsidation complex with the nucleocapsid protein N (N-P complex). Acts as a chaperone for newly synthesized free N protein, so-called N0, allowing encapsidation of nascent RNA chains during replication. The nucleoprotein protein N prevents excessive phosphorylation of P, which leads to down-regulation of viral transcription/ replication. Participates, together with N, in the formation of viral factories (viroplasms), which are large inclusions in the host cytoplasm where replication takes place. The polypeptide is Phosphoprotein (P/V) (Tupaia paramyxovirus (TPMV)).